Consider the following 531-residue polypeptide: Transcription factor LG2 (531 aa).

2 disordered regions span residues Arg115–Ala154 and Leu195–Asp220. The span at His116–Ala154 shows a compositional bias: polar residues. Positions Asp220 to Arg264 constitute a bZIP domain. The basic motif stretch occupies residues Lys222 to Lys242. Residues Glu224–Arg231 carry the Nuclear localization signal motif. Residues Leu248–Leu262 are leucine-zipper. The region spanning Ala285–Arg499 is the DOG1 domain.

Belongs to the bZIP family. Binds DNA as a dimer. In terms of tissue distribution, expression in meristem/developing ligule regions.

The protein localises to the nucleus. In terms of biological role, required for the formation of the blade-sheath boundary in leaves. Promotes flowering. In Zea mays (Maize), this protein is Transcription factor LG2.